Consider the following 283-residue polypeptide: 1-acyl-sn-glycerol-3-phosphate acyltransferase alpha (283 aa).

The first 26 residues, 1-26 (MDLWPGAWMLLLLLFLLLLFLLPTLW), serve as a signal peptide directing secretion. Topologically, residues 27-37 (FCSPSAKYFFK) are lumenal. The chain crosses the membrane as a helical span at residues 38-58 (MAFYNGWILFLAVLAIPVCAV). At 59-127 (RGRNVENMKI…PGRCVPIAKR (69 aa)) the chain is on the cytoplasmic side. The short motif at 104 to 109 (HQSSLD) is the HXXXXD motif element. A helical membrane pass occupies residues 128-148 (ELLWAGSAGLACWLAGVIFID). Residues 149-283 (RKRTGDAISV…DYLKKPGGGG (135 aa)) lie on the Lumenal side of the membrane. The short motif at 178 to 181 (EGTR) is the EGTR motif element.

Belongs to the 1-acyl-sn-glycerol-3-phosphate acyltransferase family. Widely expressed. Expressed in adipose tissue and at high levels in testis and pancreas. Expressed at lower levels in tissues such as heart, brain, placenta, kidney, lung, spleen, thymus, prostate, ovary, intestine, colon, leukocyte and liver.

It is found in the endoplasmic reticulum membrane. It catalyses the reaction a 1-acyl-sn-glycero-3-phosphate + an acyl-CoA = a 1,2-diacyl-sn-glycero-3-phosphate + CoA. It carries out the reaction 1-(9Z-octadecenoyl)-sn-glycero-3-phosphate + (9Z)-octadecenoyl-CoA = 1,2-di-(9Z-octadecenoyl)-sn-glycero-3-phosphate + CoA. The catalysed reaction is 1-(9Z-octadecenoyl)-sn-glycero-3-phosphate + hexadecanoyl-CoA = 1-(9Z)-octadecenoyl-2-hexadecanoyl-sn-glycero-3-phosphate + CoA. The enzyme catalyses heptadecanoyl-CoA + 1-(9Z-octadecenoyl)-sn-glycero-3-phosphate = 1-(9Z)-octadecenoyl-2-heptadecanoyl-sn-glycero-3-phosphate + CoA. It catalyses the reaction 1-(9Z-octadecenoyl)-sn-glycero-3-phosphate + octadecanoyl-CoA = 1-(9Z-octadecenoyl)-2-octadecanoyl-sn-glycero-3-phosphate + CoA. It carries out the reaction 1-(9Z-octadecenoyl)-sn-glycero-3-phosphate + (9Z,12Z)-octadecadienoyl-CoA = 1-(9Z)-octadecenoyl-2-(9Z,12Z)-octadecadienoyl-sn-glycero-3-phosphate + CoA. The catalysed reaction is 1-(9Z-octadecenoyl)-sn-glycero-3-phosphate + tetradecanoyl-CoA = 1-(9Z)-octadecenoyl-2-tetradecanoyl-sn-glycero-3-phosphate + CoA. The enzyme catalyses pentadecanoyl-CoA + 1-(9Z-octadecenoyl)-sn-glycero-3-phosphate = 1-(9Z)-octadecenoyl-2-pentadecanoyl-sn-glycero-3-phosphate + CoA. It catalyses the reaction 1-hexadecanoyl-sn-glycero-3-phosphate + (9Z)-octadecenoyl-CoA = 1-hexadecanoyl-2-(9Z-octadecenoyl)-sn-glycero-3-phosphate + CoA. It carries out the reaction 1-(9Z,12Z,15Z)-octadecatrienoyl-sn-glycero-3-phosphate + (9Z)-octadecenoyl-CoA = 1-(9Z,12Z,15Z)-octadecatrienoyl-2-(9Z)-octadecenoyl-sn-glycero-3-phosphate + CoA. The catalysed reaction is 1-(6Z,9Z,12Z-octadecatrienoyl)-sn-glycero-3-phosphate + (9Z)-octadecenoyl-CoA = (6Z,9Z,12Z)-octadecatrienoyl-2-(9Z)-octadecenoyl-sn-glycero-3-phosphate + CoA. The enzyme catalyses 1-eicosanoyl-sn-glycero-3-phosphate + (9Z)-octadecenoyl-CoA = 1-eicosanoyl-2-(9Z)-octadecenoyl-sn-glycero-3-phosphate + CoA. It catalyses the reaction 1-tetradecanoyl-sn-glycerol 3-phosphate + (9Z)-octadecenoyl-CoA = 1-tetradecanoyl-2-(9Z)-octadecenoyl-sn-glycero-3-phosphate + CoA. It carries out the reaction 1-(9Z-octadecenoyl)-sn-glycero-3-phosphate + (5Z,8Z,11Z,14Z)-eicosatetraenoyl-CoA = 1-(9Z)-octadecenoyl-2-(5Z,8Z,11Z,14Z)-eicosatetraenoyl-sn-glycero-3-phosphate + CoA. The catalysed reaction is 1-(9Z-octadecenoyl)-sn-glycero-3-phosphate + dodecanoyl-CoA = 1-(9Z)-octadecenoyl-2-dodecanoyl-sn-glycero-3-phosphate + CoA. The enzyme catalyses (6Z)-octadecenoyl-CoA + 1-(9Z-octadecenoyl)-sn-glycero-3-phosphate = 1-(9Z)-octadecenoyl-2-(6Z)-octadecenoyl-sn-glycero-3-phosphate + CoA. It catalyses the reaction (11Z)-octadecenoyl-CoA + 1-(9Z-octadecenoyl)-sn-glycero-3-phosphate = 1-(9Z)-octadecenoyl-2-(11Z)-octadecenoyl-sn-glycero-3-phosphate + CoA. It carries out the reaction (9Z)-hexadecenoyl-CoA + 1-(9Z-octadecenoyl)-sn-glycero-3-phosphate = 1-(9Z-octadecenoyl)-2-(9Z-hexadecenoyl)-sn-glycero-3-phosphate + CoA. It participates in phospholipid metabolism; CDP-diacylglycerol biosynthesis; CDP-diacylglycerol from sn-glycerol 3-phosphate: step 2/3. Converts 1-acyl-sn-glycerol-3-phosphate (lysophosphatidic acid or LPA) into 1,2-diacyl-sn-glycerol-3-phosphate (phosphatidic acid or PA) by incorporating an acyl moiety at the sn-2 position of the glycerol backbone. In Homo sapiens (Human), this protein is 1-acyl-sn-glycerol-3-phosphate acyltransferase alpha (AGPAT1).